We begin with the raw amino-acid sequence, 501 residues long: 25-hydroxyvitamin D-1 alpha hydroxylase, mitochondrial (501 aa).

Heme is bound at residue Cys448.

This sequence belongs to the cytochrome P450 family. Heme serves as cofactor. In terms of tissue distribution, kidney.

The protein resides in the mitochondrion membrane. The catalysed reaction is calcidiol + 2 reduced [adrenodoxin] + O2 + 2 H(+) = calcitriol + 2 oxidized [adrenodoxin] + H2O. It carries out the reaction secalciferol + 2 reduced [adrenodoxin] + O2 + 2 H(+) = calcitetrol + 2 oxidized [adrenodoxin] + H2O. It participates in hormone biosynthesis; cholecalciferol biosynthesis. Functionally, catalyzes the conversion of 25-hydroxyvitamin D3 (25(OH)D3) to 1-alpha,25-dihydroxyvitamin D3 (1alpha,25(OH)(2)D3), and of 24,25-dihydroxyvitamin D3 (24,25(OH)(2)D3) to 1-alpha,24,25-trihydroxyvitamin D3 (1alpha,24,25(OH)(3)D3). Is also active with 25-hydroxy-24-oxo-vitamin D3. Plays an important role in normal bone growth, calcium metabolism, and tissue differentiation. This is 25-hydroxyvitamin D-1 alpha hydroxylase, mitochondrial (Cyp27b1) from Rattus norvegicus (Rat).